The sequence spans 283 residues: tRNA pseudouridine synthase B (283 aa).

Asp-38 serves as the catalytic Nucleophile.

Belongs to the pseudouridine synthase TruB family. Type 1 subfamily.

It carries out the reaction uridine(55) in tRNA = pseudouridine(55) in tRNA. Its function is as follows. Responsible for synthesis of pseudouridine from uracil-55 in the psi GC loop of transfer RNAs. In Aster yellows witches'-broom phytoplasma (strain AYWB), this protein is tRNA pseudouridine synthase B.